Consider the following 110-residue polypeptide: UPF0132 membrane protein MJ1443 (110 aa).

Helical transmembrane passes span 15–35, 49–69, and 70–90; these read IEGA…YILE, IILF…PYGW, and MLSG…MYKA.

Belongs to the UPF0132 family.

The protein localises to the cell membrane. The chain is UPF0132 membrane protein MJ1443 from Methanocaldococcus jannaschii (strain ATCC 43067 / DSM 2661 / JAL-1 / JCM 10045 / NBRC 100440) (Methanococcus jannaschii).